We begin with the raw amino-acid sequence, 385 residues long: 1-deoxy-D-xylulose 5-phosphate reductoisomerase (385 aa).

The NADPH site is built by Thr10, Gly11, Ser12, Ile13, Lys37, and Asn124. Lys125 contacts 1-deoxy-D-xylulose 5-phosphate. Glu126 is a binding site for NADPH. Residue Asp150 coordinates Mn(2+). Residues Ser151, Glu152, Ser176, and His199 each coordinate 1-deoxy-D-xylulose 5-phosphate. Glu152 lines the Mn(2+) pocket. Gly205 contributes to the NADPH binding site. Residues Ser212, Asn217, Lys218, and Glu221 each contribute to the 1-deoxy-D-xylulose 5-phosphate site. Position 221 (Glu221) interacts with Mn(2+).

It belongs to the DXR family. It depends on Mg(2+) as a cofactor. The cofactor is Mn(2+).

The enzyme catalyses 2-C-methyl-D-erythritol 4-phosphate + NADP(+) = 1-deoxy-D-xylulose 5-phosphate + NADPH + H(+). Its pathway is isoprenoid biosynthesis; isopentenyl diphosphate biosynthesis via DXP pathway; isopentenyl diphosphate from 1-deoxy-D-xylulose 5-phosphate: step 1/6. Its function is as follows. Catalyzes the NADPH-dependent rearrangement and reduction of 1-deoxy-D-xylulose-5-phosphate (DXP) to 2-C-methyl-D-erythritol 4-phosphate (MEP). The chain is 1-deoxy-D-xylulose 5-phosphate reductoisomerase from Clostridium botulinum (strain Kyoto / Type A2).